The sequence spans 107 residues: UPF0145 protein YbjQ (107 aa).

Belongs to the UPF0145 family.

In Salmonella gallinarum (strain 287/91 / NCTC 13346), this protein is UPF0145 protein YbjQ.